We begin with the raw amino-acid sequence, 77 residues long: Conotoxin Vc1 (77 aa).

The first 22 residues, M1–A22, serve as a signal peptide directing secretion. 2 consecutive propeptides follow at residues H23 to R58 and R73 to Y77.

Belongs to the conotoxin H superfamily. Expressed by the venom duct.

The protein resides in the secreted. In terms of biological role, probable toxin. The sequence is that of Conotoxin Vc1 from Conus victoriae (Queen Victoria cone).